A 331-amino-acid chain; its full sequence is PTS-dependent dihydroxyacetone kinase 2, dihydroxyacetone-binding subunit DhaK (331 aa).

One can recognise a DhaK domain in the interval 7-328; that stretch reads DGYEAVEEML…LDTPCDTPYF (322 aa). Dihydroxyacetone contacts are provided by residues 55 to 58 and Asp-111; that span reads GSGH. Residue His-58 is the Proton acceptor of the active site. His-218 (tele-hemiaminal-histidine intermediate) is an active-site residue.

As to quaternary structure, homodimer. The dihydroxyacetone kinase complex is composed of a homodimer of DhaM, a homodimer of DhaK and the subunit DhaL.

It localises to the cytoplasm. It catalyses the reaction dihydroxyacetone + phosphoenolpyruvate = dihydroxyacetone phosphate + pyruvate. It functions in the pathway polyol metabolism; glycerol degradation. Functionally, dihydroxyacetone binding subunit of the dihydroxyacetone kinase, which is responsible for the phosphoenolpyruvate (PEP)-dependent phosphorylation of dihydroxyacetone via a phosphoryl group transfer from DhaL-ATP. This chain is PTS-dependent dihydroxyacetone kinase 2, dihydroxyacetone-binding subunit DhaK, found in Listeria innocua serovar 6a (strain ATCC BAA-680 / CLIP 11262).